Consider the following 339-residue polypeptide: Ketol-acid reductoisomerase (NADP(+)) (339 aa).

In terms of domain architecture, KARI N-terminal Rossmann spans 1–182 (MRVYYDRDAD…GGGRSGIIET (182 aa)). NADP(+)-binding positions include 24-27 (YGSQ), Lys-48, Ser-51, Thr-53, and 83-86 (DELQ). Residue His-108 is part of the active site. Gly-134 is a binding site for NADP(+). A KARI C-terminal knotted domain is found at 183–328 (NFKEECETDL…AKLRGMMPWI (146 aa)). Residues Asp-191, Glu-195, Glu-227, and Glu-231 each contribute to the Mg(2+) site. Ser-252 provides a ligand contact to substrate.

This sequence belongs to the ketol-acid reductoisomerase family. Mg(2+) is required as a cofactor.

It carries out the reaction (2R)-2,3-dihydroxy-3-methylbutanoate + NADP(+) = (2S)-2-acetolactate + NADPH + H(+). It catalyses the reaction (2R,3R)-2,3-dihydroxy-3-methylpentanoate + NADP(+) = (S)-2-ethyl-2-hydroxy-3-oxobutanoate + NADPH + H(+). The protein operates within amino-acid biosynthesis; L-isoleucine biosynthesis; L-isoleucine from 2-oxobutanoate: step 2/4. It functions in the pathway amino-acid biosynthesis; L-valine biosynthesis; L-valine from pyruvate: step 2/4. In terms of biological role, involved in the biosynthesis of branched-chain amino acids (BCAA). Catalyzes an alkyl-migration followed by a ketol-acid reduction of (S)-2-acetolactate (S2AL) to yield (R)-2,3-dihydroxy-isovalerate. In the isomerase reaction, S2AL is rearranged via a Mg-dependent methyl migration to produce 3-hydroxy-3-methyl-2-ketobutyrate (HMKB). In the reductase reaction, this 2-ketoacid undergoes a metal-dependent reduction by NADPH to yield (R)-2,3-dihydroxy-isovalerate. The protein is Ketol-acid reductoisomerase (NADP(+)) of Agrobacterium fabrum (strain C58 / ATCC 33970) (Agrobacterium tumefaciens (strain C58)).